A 131-amino-acid chain; its full sequence is D-ribose pyranase (131 aa).

The active-site Proton donor is H20. Substrate-binding positions include D28, H98, and 120-122; that span reads YAN.

This sequence belongs to the RbsD / FucU family. RbsD subfamily. As to quaternary structure, homodecamer.

It localises to the cytoplasm. It carries out the reaction beta-D-ribopyranose = beta-D-ribofuranose. It functions in the pathway carbohydrate metabolism; D-ribose degradation; D-ribose 5-phosphate from beta-D-ribopyranose: step 1/2. In terms of biological role, catalyzes the interconversion of beta-pyran and beta-furan forms of D-ribose. In Bacillus thuringiensis (strain Al Hakam), this protein is D-ribose pyranase.